A 432-amino-acid polypeptide reads, in one-letter code: 5-hydroxybenzimidazole synthase BzaA (432 aa).

Substrate contacts are provided by residues M95, Y124, H163, 185 to 187, and 226 to 229; these read SYG and DGMR. A Zn(2+)-binding site is contributed by H269. F292 is a substrate binding site. H333 contacts Zn(2+). Residues C409, C412, and C416 each contribute to the [4Fe-4S] cluster site.

Belongs to the ThiC family. 5-hydroxybenzimidazole synthase subfamily. The cofactor is [4Fe-4S] cluster.

The catalysed reaction is 5-amino-1-(5-phospho-beta-D-ribosyl)imidazole + AH2 + S-adenosyl-L-methionine = 5-hydroxybenzimidazole + 5'-deoxyadenosine + formate + L-methionine + A + NH4(+) + phosphate + 2 H(+). In terms of biological role, together with BzaB, probably catalyzes the conversion of aminoimidazole ribotide (AIR) to 5-hydroxybenzimidazole (5-HBI) in a radical S-adenosyl-L-methionine (SAM)-dependent reaction. Is thus involved in the anaerobic biosynthesis of the benzimidazole lower axial ligand of the cobamide produced by M.thermoacetica. Requires BzaB for catalytic activity, as BzaA alone displays no activity. This is 5-hydroxybenzimidazole synthase BzaA from Moorella thermoacetica (strain ATCC 39073 / JCM 9320).